Here is a 464-residue protein sequence, read N- to C-terminus: Glycine--tRNA ligase (464 aa).

R104 and E175 together coordinate substrate. Residues 207-209 (RNE), 217-222 (FRTREF), 292-293 (EL), and 336-339 (GVNR) contribute to the ATP site. 222–226 (FEQME) contributes to the substrate binding site. 332–336 (EPALG) contributes to the substrate binding site.

Belongs to the class-II aminoacyl-tRNA synthetase family. In terms of assembly, homodimer.

The protein resides in the cytoplasm. The enzyme catalyses tRNA(Gly) + glycine + ATP = glycyl-tRNA(Gly) + AMP + diphosphate. In terms of biological role, catalyzes the attachment of glycine to tRNA(Gly). In Leptospira borgpetersenii serovar Hardjo-bovis (strain JB197), this protein is Glycine--tRNA ligase.